The sequence spans 247 residues: Inhibitory synaptic factor 1 (247 aa).

The stretch at 30–65 (RAVIGQLEGILRDLKEVAKELKEVVEQIDRLTSDFE) forms a coiled coil. Disordered stretches follow at residues 69–90 (DTDDWTPGTVSSTSSSEKGGPL), 112–166 (ASTP…RDRV), and 180–217 (DDSEDPPYGQETPRDPPRATAPCAVMKSKPGGLTGVRK). A compositionally biased stretch (polar residues) spans 76–85 (GTVSSTSSSE).

This sequence belongs to the INSYN1 family.

It localises to the postsynaptic density. In terms of biological role, may be a component of the protein machinery at the inhibitory synapses, probably acting as a scaffold. The chain is Inhibitory synaptic factor 1 from Xenopus laevis (African clawed frog).